Here is a 185-residue protein sequence, read N- to C-terminus: MMTVTAQQQAELIKNSIKSIPDYPKPGILFRDVTSLLEDPVAYAASIEMLANRYRNSGVTKVVGTEARGFLFGAPVALALGVGFVPVRKPGKLPRPTISESYELEYGSDTLEIHSDAISAGDNVLVIDDLLATGGTLEATVKLIRRLGGTVNDAAFIINLFDLGGEQRLTGMGVTCYSLVDFPGH.

Belongs to the purine/pyrimidine phosphoribosyltransferase family. Homodimer.

It is found in the cytoplasm. It carries out the reaction AMP + diphosphate = 5-phospho-alpha-D-ribose 1-diphosphate + adenine. Its pathway is purine metabolism; AMP biosynthesis via salvage pathway; AMP from adenine: step 1/1. Catalyzes a salvage reaction resulting in the formation of AMP, that is energically less costly than de novo synthesis. This chain is Adenine phosphoribosyltransferase, found in Pectobacterium carotovorum subsp. carotovorum (strain PC1).